The sequence spans 132 residues: MLKYMLDTNIVIYVIKRRPLEILSRFNQNAGKMCVSSITVAELYYGAEKSEYPERNIAVIEDFLSRLTILDYQPKHAAHFGNIKAELSKQGKLIGENDIHIAAHARSEGLILVSNNLREFERVIALRTENWV.

The PINc domain maps to 4–123 (YMLDTNIVIY…SNNLREFERV (120 aa)). Aspartate 7 and aspartate 98 together coordinate Mg(2+).

It belongs to the PINc/VapC protein family. In terms of assembly, probably forms a complex with cognate antitoxin VapB2. Mg(2+) is required as a cofactor.

Its function is as follows. Toxic component of a type II toxin-antitoxin (TA) system. Acts as an RNase. Its toxic effect is neutralized by cognate antitoxin VapB2 but not by non-cognate antitoxin VapB1. This chain is Ribonuclease VapC, found in Haemophilus influenzae (strain 86-028NP).